A 421-amino-acid polypeptide reads, in one-letter code: tRNA (guanine(37)-N(1))-methyltransferase (421 aa).

Residues R198, 242-243 (DL), 270-271 (DA), and N293 contribute to the S-adenosyl-L-methionine site.

Belongs to the class I-like SAM-binding methyltransferase superfamily. TRM5/TYW2 family. As to quaternary structure, monomer.

The protein localises to the mitochondrion matrix. The protein resides in the nucleus. It localises to the cytoplasm. The enzyme catalyses guanosine(37) in tRNA + S-adenosyl-L-methionine = N(1)-methylguanosine(37) in tRNA + S-adenosyl-L-homocysteine + H(+). In terms of biological role, specifically methylates the N1 position of guanosine-37 in various cytoplasmic and mitochondrial tRNAs. Methylation is not dependent on the nature of the nucleoside 5' of the target nucleoside. This is the first step in the biosynthesis of wybutosine (yW), a modified base adjacent to the anticodon of tRNAs and required for accurate decoding. This is tRNA (guanine(37)-N(1))-methyltransferase from Paramecium tetraurelia.